Reading from the N-terminus, the 377-residue chain is WAT1-related protein At3g56620 (377 aa).

Transmembrane regions (helical) follow at residues phenylalanine 13–leucine 33, tyrosine 40–leucine 60, proline 67–isoleucine 87, threonine 102–cysteine 122, leucine 142–leucine 162, valine 183–leucine 203, leucine 210–valine 230, leucine 235–methionine 255, isoleucine 274–isoleucine 294, and leucine 299–tryptophan 319. 2 consecutive EamA domains span residues tyrosine 22–isoleucine 152 and phenylalanine 190–leucine 318.

This sequence belongs to the drug/metabolite transporter (DMT) superfamily. Plant drug/metabolite exporter (P-DME) (TC 2.A.7.4) family.

The protein localises to the membrane. This Arabidopsis thaliana (Mouse-ear cress) protein is WAT1-related protein At3g56620.